The primary structure comprises 342 residues: DNA-directed RNA polymerase subunit alpha (342 aa).

Residues 1-239 (MTTFLAKNWS…DQLQVFINFQ (239 aa)) are alpha N-terminal domain (alpha-NTD). The tract at residues 254-342 (INPVLLKKVY…SLAKKHEDQY (89 aa)) is alpha C-terminal domain (alpha-CTD).

Belongs to the RNA polymerase alpha chain family. In terms of assembly, homodimer. The RNAP catalytic core consists of 2 alpha, 1 beta, 1 beta' and 1 omega subunit. When a sigma factor is associated with the core the holoenzyme is formed, which can initiate transcription.

The catalysed reaction is RNA(n) + a ribonucleoside 5'-triphosphate = RNA(n+1) + diphosphate. DNA-dependent RNA polymerase catalyzes the transcription of DNA into RNA using the four ribonucleoside triphosphates as substrates. The polypeptide is DNA-directed RNA polymerase subunit alpha (Orientia tsutsugamushi (strain Ikeda) (Rickettsia tsutsugamushi)).